We begin with the raw amino-acid sequence, 217 residues long: GTP-binding protein yptV2 (217 aa).

A GTP-binding site is contributed by 20–27 (GDSGVGKS). An Effector region motif is present at residues 42-50 (FITTIGIDF). GTP contacts are provided by residues 68–72 (DTAGQ) and 126–129 (NKLD). The tract at residues 198-217 (QPVRLTSGSPSPAQGKSCCR) is disordered. Polar residues predominate over residues 201–211 (RLTSGSPSPAQ). 2 S-geranylgeranyl cysteine lipidation sites follow: cysteine 215 and cysteine 216.

The protein belongs to the small GTPase superfamily. Rab family.

It localises to the cell membrane. Its function is as follows. Protein transport. Probably involved in vesicular traffic. The polypeptide is GTP-binding protein yptV2 (YPTV2) (Volvox carteri (Green alga)).